The chain runs to 247 residues: 2,3-bisphosphoglycerate-dependent phosphoglycerate mutase (247 aa).

Substrate-binding positions include arginine 8–asparagine 15, threonine 21–glycine 22, arginine 60, glutamate 87–tyrosine 90, lysine 98, arginine 114–arginine 115, and glycine 183–asparagine 184. Histidine 9 (tele-phosphohistidine intermediate) is an active-site residue. The Proton donor/acceptor role is filled by glutamate 87.

Belongs to the phosphoglycerate mutase family. BPG-dependent PGAM subfamily. Homodimer.

The catalysed reaction is (2R)-2-phosphoglycerate = (2R)-3-phosphoglycerate. Its pathway is carbohydrate degradation; glycolysis; pyruvate from D-glyceraldehyde 3-phosphate: step 3/5. Its function is as follows. Catalyzes the interconversion of 2-phosphoglycerate and 3-phosphoglycerate. The polypeptide is 2,3-bisphosphoglycerate-dependent phosphoglycerate mutase (Acidovorax sp. (strain JS42)).